Consider the following 262-residue polypeptide: ATP synthase subunit delta (262 aa).

It belongs to the ATPase delta chain family. As to quaternary structure, F-type ATPases have 2 components, F(1) - the catalytic core - and F(0) - the membrane proton channel. F(1) has five subunits: alpha(3), beta(3), gamma(1), delta(1), epsilon(1). F(0) has three main subunits: a(1), b(2) and c(10-14). The alpha and beta chains form an alternating ring which encloses part of the gamma chain. F(1) is attached to F(0) by a central stalk formed by the gamma and epsilon chains, while a peripheral stalk is formed by the delta and b chains.

The protein resides in the cell membrane. In terms of biological role, f(1)F(0) ATP synthase produces ATP from ADP in the presence of a proton or sodium gradient. F-type ATPases consist of two structural domains, F(1) containing the extramembraneous catalytic core and F(0) containing the membrane proton channel, linked together by a central stalk and a peripheral stalk. During catalysis, ATP synthesis in the catalytic domain of F(1) is coupled via a rotary mechanism of the central stalk subunits to proton translocation. Functionally, this protein is part of the stalk that links CF(0) to CF(1). It either transmits conformational changes from CF(0) to CF(1) or is implicated in proton conduction. In Tropheryma whipplei (strain TW08/27) (Whipple's bacillus), this protein is ATP synthase subunit delta.